The following is a 327-amino-acid chain: Biotin synthase (327 aa).

Positions 49–282 (FNKEKIDLCS…KKVIRLCGGR (234 aa)) constitute a Radical SAM core domain. Positions 67, 71, and 74 each coordinate [4Fe-4S] cluster. Positions 110, 142, 201, and 277 each coordinate [2Fe-2S] cluster.

The protein belongs to the radical SAM superfamily. Biotin synthase family. As to quaternary structure, homodimer. [4Fe-4S] cluster is required as a cofactor. The cofactor is [2Fe-2S] cluster.

The catalysed reaction is (4R,5S)-dethiobiotin + (sulfur carrier)-SH + 2 reduced [2Fe-2S]-[ferredoxin] + 2 S-adenosyl-L-methionine = (sulfur carrier)-H + biotin + 2 5'-deoxyadenosine + 2 L-methionine + 2 oxidized [2Fe-2S]-[ferredoxin]. It participates in cofactor biosynthesis; biotin biosynthesis; biotin from 7,8-diaminononanoate: step 2/2. Functionally, catalyzes the conversion of dethiobiotin (DTB) to biotin by the insertion of a sulfur atom into dethiobiotin via a radical-based mechanism. The polypeptide is Biotin synthase (Methanococcus maripaludis (strain C7 / ATCC BAA-1331)).